Reading from the N-terminus, the 318-residue chain is uncharacterized protein (318 aa).

A run of 4 helical transmembrane segments spans residues 112–132 (VIGV…PVFL), 147–167 (IAIE…FLSM), 209–229 (CGSS…LLVP), and 237–257 (VIDR…VLQL).

The protein localises to the cell membrane. This is an uncharacterized protein from Bacillus subtilis (strain 168).